The primary structure comprises 171 residues: Co-chaperone protein HscB (171 aa).

Positions 2–74 (DYFTLFGLPA…LARAEYLLSL (73 aa)) constitute a J domain.

The protein belongs to the HscB family. As to quaternary structure, interacts with HscA and stimulates its ATPase activity. Interacts with IscU.

Co-chaperone involved in the maturation of iron-sulfur cluster-containing proteins. Seems to help targeting proteins to be folded toward HscA. The chain is Co-chaperone protein HscB from Enterobacter sp. (strain 638).